A 249-amino-acid chain; its full sequence is MTILRDYKLSGRKAFAVLLDPDKVEQDAFSTLLQRTADYPVDFFLVGGSLVTDYAHKEVIATIRRYSSTPVILFPGNPLHIESSADAILLLSLISGRNADFLIGQHVIAAPLLKKSGLEILPTGYMVVDSGTQTTVSYISGTMPLPHDKPDVAACTALAGEMLGLQLMYLDAGSGARRPVSAAMIAAVRKAVNVPIIVGGGITSGEKAYEALKAGADMIVVGNGVEQDPDLLPQLATVVREFNQSVVQA.

The Mg(2+) site is built by Asp20 and Ser49. Residues 169–175, 200–201, and 222–223 contribute to the sn-glycerol 1-phosphate site; these read YLDAGSG, GG, and GN.

This sequence belongs to the GGGP/HepGP synthase family. Group II subfamily. In terms of assembly, homohexamer. Mg(2+) serves as cofactor.

It catalyses the reaction sn-glycerol 1-phosphate + (2E,6E,10E)-geranylgeranyl diphosphate = sn-3-O-(geranylgeranyl)glycerol 1-phosphate + diphosphate. Functionally, prenyltransferase that catalyzes the transfer of the geranylgeranyl moiety of geranylgeranyl diphosphate (GGPP) to the C3 hydroxyl of sn-glycerol-1-phosphate (G1P). In Spirosoma linguale (strain ATCC 33905 / DSM 74 / LMG 10896 / Claus 1), this protein is Geranylgeranylglyceryl phosphate synthase.